We begin with the raw amino-acid sequence, 299 residues long: Probable lipid kinase YegS-like (299 aa).

One can recognise a DAGKc domain in the interval 1-129 (MSERKALLIL…IDLGEVGGQM (129 aa)). Residues T39, 65–71 (GDGTLRD), and T92 contribute to the ATP site. Positions 210, 213, and 215 each coordinate Mg(2+). Residue E268 is the Proton acceptor of the active site.

This sequence belongs to the diacylglycerol/lipid kinase family. YegS lipid kinase subfamily. It depends on Mg(2+) as a cofactor. Ca(2+) serves as cofactor.

It is found in the cytoplasm. Functionally, probably phosphorylates lipids; the in vivo substrate is unknown. The polypeptide is Probable lipid kinase YegS-like (Pseudomonas fluorescens (strain ATCC BAA-477 / NRRL B-23932 / Pf-5)).